Reading from the N-terminus, the 462-residue chain is Metal cation symporter ZIP8 (462 aa).

The first 19 residues, 1 to 19, serve as a signal peptide directing secretion; that stretch reads MAPGRAVAGLLLLAATGLG. The Extracellular segment spans residues 20-132; it reads RPSEGPELAF…PSFSEVWGYG (113 aa). N-linked (GlcNAc...) asparagine glycans are attached at residues asparagine 40, asparagine 88, and asparagine 96. A helical membrane pass occupies residues 133 to 153; it reads FLSVTIINLASLLGLILTPLI. The Cytoplasmic portion of the chain corresponds to 154 to 160; it reads KKSYFPK. A helical membrane pass occupies residues 161 to 181; sequence ILTYFVGLAIGTLFSNAIFQL. Residues 182-191 are Extracellular-facing; the sequence is IPEAFGFNPK. The helical transmembrane segment at 192 to 212 threads the bilayer; sequence IDNYVEKAVAVFGGFYMLFFV. The Cytoplasmic segment spans residues 213 to 367; that stretch reads ERTLKMLLKT…LNAGMSTRQA (155 aa). The short motif at 345–350 is the XEXPHE-motif element; sequence EEFPHE. The chain crosses the membrane as a helical span at residues 368–388; it reads LLFNFLSACSCYVGLAFGILV. Topologically, residues 389 to 390 are extracellular; that stretch reads GN. A helical transmembrane segment spans residues 391–411; it reads NFAPNIIFALAGGMFLYISLA. Over 412–431 the chain is Cytoplasmic; that stretch reads DMFPEMNDMLREKVTGRQTD. A helical membrane pass occupies residues 432 to 452; sequence FTFFMIQNAGMLTGFTAILLI. The Extracellular segment spans residues 453–462; that stretch reads TLYAGDIELQ.

This sequence belongs to the ZIP transporter (TC 2.A.5) family. As to quaternary structure, homodimer. N-glycosylated. N-glycosylation is not required for proper iron and zinc transport.

It localises to the cell membrane. Its subcellular location is the lysosome membrane. The protein localises to the apical cell membrane. The protein resides in the basolateral cell membrane. The enzyme catalyses Zn(2+)(out) + 2 hydrogencarbonate(out) = Zn(2+)(in) + 2 hydrogencarbonate(in). It catalyses the reaction selenite(out) + Zn(2+)(out) + hydrogencarbonate(out) = selenite(in) + Zn(2+)(in) + hydrogencarbonate(in). It carries out the reaction Mn(2+)(out) + 2 hydrogencarbonate(out) = Mn(2+)(in) + 2 hydrogencarbonate(in). The catalysed reaction is Fe(2+)(out) + 2 hydrogencarbonate(out) = Fe(2+)(in) + 2 hydrogencarbonate(in). The enzyme catalyses Cd(2+)(out) + 2 hydrogencarbonate(out) = Cd(2+)(in) + 2 hydrogencarbonate(in). It catalyses the reaction Co(2+)(out) + 2 hydrogencarbonate(out) = Co(2+)(in) + 2 hydrogencarbonate(in). Electroneutral divalent metal cation:bicarbonate symporter of the plasma membrane mediating the cellular uptake of zinc and manganese, two divalent metal cations important for development, tissue homeostasis and immunity. Transports an electroneutral complex composed of a divalent metal cation and two bicarbonate anions or alternatively a bicarbonate and a selenite anion. Thereby, it also contributes to the cellular uptake of selenium, an essential trace metal and micronutrient. Also imports cadmium a non-essential metal which is cytotoxic and carcinogenic. May also transport iron and cobalt through membranes. Through zinc import, indirectly regulates the metal-dependent transcription factor MTF1 and the expression of some metalloproteases involved in cartilage catabolism and also probably heart development. Also indirectly regulates the expression of proteins involved in cell morphology and cytoskeleton organization. Indirectly controls innate immune function and inflammatory response by regulating zinc cellular uptake which in turn modulates the expression of genes specific of these processes. Protects, for instance, cells from injury and death at the onset of inflammation. By regulating zinc influx into monocytes also directly modulates their adhesion to endothelial cells and arteries. Reclaims manganese from the bile at the apical membrane of hepatocytes, thereby regulating the activity of the manganese-dependent enzymes through the systemic levels of the nutrient. Also participates in manganese reabsorption in the proximal tubule of the kidney. By mediating the extracellular uptake of manganese by cells of the blood-brain barrier, may also play a role in the transport of the micronutrient to the brain. With manganese cellular uptake also participates in mitochondrial proper function. Finally, also probably functions intracellularly, translocating zinc from lysosome to cytosol to indirectly enhance the expression of specific genes during TCR-mediated T cell activation. This Rattus norvegicus (Rat) protein is Metal cation symporter ZIP8.